The sequence spans 434 residues: ATP-dependent protease ATPase subunit HslU (434 aa).

ATP-binding positions include Ile-18, 60 to 65 (GVGKTE), Asp-247, Glu-312, and Arg-384.

This sequence belongs to the ClpX chaperone family. HslU subfamily. As to quaternary structure, a double ring-shaped homohexamer of HslV is capped on each side by a ring-shaped HslU homohexamer. The assembly of the HslU/HslV complex is dependent on binding of ATP.

It is found in the cytoplasm. ATPase subunit of a proteasome-like degradation complex; this subunit has chaperone activity. The binding of ATP and its subsequent hydrolysis by HslU are essential for unfolding of protein substrates subsequently hydrolyzed by HslV. HslU recognizes the N-terminal part of its protein substrates and unfolds these before they are guided to HslV for hydrolysis. This is ATP-dependent protease ATPase subunit HslU from Brucella ovis (strain ATCC 25840 / 63/290 / NCTC 10512).